Reading from the N-terminus, the 178-residue chain is Cytochrome b6-f complex iron-sulfur subunit (178 aa).

A helical transmembrane segment spans residues 20–42 (LLTFGTATGVALGALYPVANYFM). The Rieske domain occupies 65–161 (KTGWLATHQA…VDIEDDAVLV (97 aa)). [2Fe-2S] cluster-binding residues include Cys-107, His-109, Cys-125, and His-128. A disulfide bond links Cys-112 and Cys-127.

It belongs to the Rieske iron-sulfur protein family. In terms of assembly, the 4 large subunits of the cytochrome b6-f complex are cytochrome b6, subunit IV (17 kDa polypeptide, PetD), cytochrome f and the Rieske protein, while the 4 small subunits are PetG, PetL, PetM and PetN. The complex functions as a dimer. [2Fe-2S] cluster is required as a cofactor.

The protein resides in the cellular thylakoid membrane. It catalyses the reaction 2 oxidized [plastocyanin] + a plastoquinol + 2 H(+)(in) = 2 reduced [plastocyanin] + a plastoquinone + 4 H(+)(out). Component of the cytochrome b6-f complex, which mediates electron transfer between photosystem II (PSII) and photosystem I (PSI), cyclic electron flow around PSI, and state transitions. The protein is Cytochrome b6-f complex iron-sulfur subunit of Prochlorococcus marinus (strain AS9601).